Here is a 374-residue protein sequence, read N- to C-terminus: Ribosomal RNA large subunit methyltransferase G (374 aa).

Belongs to the methyltransferase superfamily. RlmG family.

It is found in the cytoplasm. The catalysed reaction is guanosine(1835) in 23S rRNA + S-adenosyl-L-methionine = N(2)-methylguanosine(1835) in 23S rRNA + S-adenosyl-L-homocysteine + H(+). Functionally, specifically methylates the guanine in position 1835 (m2G1835) of 23S rRNA. This chain is Ribosomal RNA large subunit methyltransferase G, found in Pseudomonas entomophila (strain L48).